Here is a 556-residue protein sequence, read N- to C-terminus: Secreted RxLR effector protein 114 (556 aa).

The signal sequence occupies residues 1-19 (MCGAHFVAIALLVAAGCQT). Disordered regions lie at residues 43–76 (LQSR…GVLK), 108–138 (NQLK…DSDK), and 389–408 (NDKS…EDWN). The RxLR-dEER signature appears at 46–66 (RNLRESRDSKDDLLSAGDEER). Basic and acidic residues predominate over residues 47 to 67 (NLRESRDSKDDLLSAGDEERT).

It belongs to the RxLR effector family.

The protein resides in the secreted. It is found in the host cell. Functionally, secreted effector that partially suppresses the host cell death induced by cell death-inducing proteins. This chain is Secreted RxLR effector protein 114, found in Plasmopara viticola (Downy mildew of grapevine).